The primary structure comprises 430 residues: Adenylosuccinate synthetase (430 aa).

GTP is bound by residues 13–19 (GDEGKGK) and 41–43 (GHT). Residue D14 is the Proton acceptor of the active site. Positions 14 and 41 each coordinate Mg(2+). Residues 14-17 (DEGK), 39-42 (NAGH), T130, R144, Q225, T240, and R304 each bind IMP. H42 serves as the catalytic Proton donor. 300-306 (STTGRAR) is a binding site for substrate. Residues R306, 332–334 (KLD), and 414–416 (STG) contribute to the GTP site.

The protein belongs to the adenylosuccinate synthetase family. As to quaternary structure, homodimer. Mg(2+) is required as a cofactor.

The protein localises to the cytoplasm. The catalysed reaction is IMP + L-aspartate + GTP = N(6)-(1,2-dicarboxyethyl)-AMP + GDP + phosphate + 2 H(+). The protein operates within purine metabolism; AMP biosynthesis via de novo pathway; AMP from IMP: step 1/2. Functionally, plays an important role in the de novo pathway of purine nucleotide biosynthesis. Catalyzes the first committed step in the biosynthesis of AMP from IMP. The protein is Adenylosuccinate synthetase of Alcanivorax borkumensis (strain ATCC 700651 / DSM 11573 / NCIMB 13689 / SK2).